The following is a 558-amino-acid chain: Probable beta-glucosidase btgE (558 aa).

The N-terminal stretch at 1-18 is a signal peptide; sequence MKAAILATAAALTGSALA. 2 disordered regions span residues 64–105 and 251–305; these read STPS…PETP and LPSS…QMGM. 2 stretches are compositionally biased toward low complexity: residues 76-105 and 252-292; these read PETT…PETP and PSSS…SSSA. Residues 293–305 are compositionally biased toward polar residues; it reads EVPQTTGSGQMGM. The Proton donor role is filled by Glu-399. Residue Glu-495 is the Nucleophile of the active site.

This sequence belongs to the glycosyl hydrolase 17 family.

The protein localises to the secreted. It is found in the cell wall. It catalyses the reaction Hydrolysis of terminal, non-reducing beta-D-glucosyl residues with release of beta-D-glucose.. It participates in glycan metabolism; cellulose degradation. Functionally, beta-glucosidases are one of a number of cellulolytic enzymes involved in the degradation of cellulosic biomass. Catalyzes the last step releasing glucose from the inhibitory cellobiose. This Aspergillus terreus (strain NIH 2624 / FGSC A1156) protein is Probable beta-glucosidase btgE (btgE).